Reading from the N-terminus, the 33-residue chain is uncharacterized protein (33 aa).

Residues 1 to 24 (MRTGTRCDLGELSHPRKTLPPRGM) are disordered.

This is an uncharacterized protein from Treponema pallidum (strain Nichols).